A 460-amino-acid chain; its full sequence is 3-isopropylmalate dehydratase large subunit (460 aa).

[4Fe-4S] cluster is bound by residues Cys338, Cys398, and Cys401.

It belongs to the aconitase/IPM isomerase family. LeuC type 1 subfamily. Heterodimer of LeuC and LeuD. Requires [4Fe-4S] cluster as cofactor.

It catalyses the reaction (2R,3S)-3-isopropylmalate = (2S)-2-isopropylmalate. Its pathway is amino-acid biosynthesis; L-leucine biosynthesis; L-leucine from 3-methyl-2-oxobutanoate: step 2/4. Catalyzes the isomerization between 2-isopropylmalate and 3-isopropylmalate, via the formation of 2-isopropylmaleate. The protein is 3-isopropylmalate dehydratase large subunit of Streptococcus sanguinis (strain SK36).